Reading from the N-terminus, the 93-residue chain is Large ribosomal subunit protein uL23cz/uL23cy (93 aa).

Belongs to the universal ribosomal protein uL23 family. Part of the 50S ribosomal subunit.

The protein resides in the plastid. It is found in the chloroplast. In terms of biological role, binds to 23S rRNA. In Piper cenocladum (Ant piper), this protein is Large ribosomal subunit protein uL23cz/uL23cy (rpl23-A).